Here is a 147-residue protein sequence, read N- to C-terminus: Protein-export protein SecB (147 aa).

Belongs to the SecB family. As to quaternary structure, homotetramer, a dimer of dimers. One homotetramer interacts with 1 SecA dimer.

It is found in the cytoplasm. One of the proteins required for the normal export of preproteins out of the cell cytoplasm. It is a molecular chaperone that binds to a subset of precursor proteins, maintaining them in a translocation-competent state. It also specifically binds to its receptor SecA. The polypeptide is Protein-export protein SecB (Neisseria meningitidis serogroup A / serotype 4A (strain DSM 15465 / Z2491)).